A 212-amino-acid chain; its full sequence is Dephospho-CoA kinase (212 aa).

The DPCK domain maps to 6 to 211 (RLGLTGGIGS…LSCQPLSPNQ (206 aa)). 14–19 (GSGKST) serves as a coordination point for ATP.

This sequence belongs to the CoaE family.

It is found in the cytoplasm. It catalyses the reaction 3'-dephospho-CoA + ATP = ADP + CoA + H(+). The protein operates within cofactor biosynthesis; coenzyme A biosynthesis; CoA from (R)-pantothenate: step 5/5. Its function is as follows. Catalyzes the phosphorylation of the 3'-hydroxyl group of dephosphocoenzyme A to form coenzyme A. The sequence is that of Dephospho-CoA kinase from Albidiferax ferrireducens (strain ATCC BAA-621 / DSM 15236 / T118) (Rhodoferax ferrireducens).